The chain runs to 405 residues: Cytoplasmic 60S subunit biogenesis factor ZNF622 (405 aa).

U1-type zinc fingers lie at residues 4–28 (YTCI…TDWH) and 67–91 (TYCT…SKKH). The interval 135 to 230 (AIRAQPSSSP…GVEEEEEKQA (96 aa)) is disordered. Acidic residues predominate over residues 194–228 (AEEEEDSEEGWEEMDSDEDLGSEEEMEGVEEEEEK).

Belongs to the REI1 family. As to quaternary structure, homo- and heterodimer. Associates with pre-60S ribosomal particles. In terms of tissue distribution, mainly expressed in the ovary. As to expression, mainly expressed in the testis.

The protein resides in the cytoplasm. It localises to the nucleus. In terms of biological role, pre-60S-associated cytoplasmic factor involved in the cytoplasmic maturation of the 60S subunit. This Gallus gallus (Chicken) protein is Cytoplasmic 60S subunit biogenesis factor ZNF622 (ZNF622).